A 343-amino-acid chain; its full sequence is MKALVFHSPEKATFEQRDVPTPRPGEALVHIAYNSICGSDLSLYRGVWHGFGYPVVPGHEWSGTVVEINGANGHDQSLVGKNVVGDLTCACGNCAACGRGTPVLCENLQELGFTKDGACAEYMTIPVDNLRPLPDALSLRSACQVEPLAVALNAVSIAGVAPGDRVAVMGAGGIGLMLMQVARHLGGEVTVVSEPVAERRAVAGQLGATELCSAEPGQLAELVARRPELTPDVVLEASGYPAALQEAIEVVRPGGRIGLIGYRVEETGPMSPQHIAVKALTLRGSLGPGGRFDDAVELLAKGDDIAVEPLLSHEFGLADYATALDLALSRTNGNVRSFFNLRD.

The Zn(2+) site is built by C37, H59, C91, C94, C97, C105, and E146.

It belongs to the zinc-containing alcohol dehydrogenase family. DOIA dehydrogenase subfamily. The cofactor is Zn(2+).

It catalyses the reaction 2-deoxy-scyllo-inosamine + NADP(+) = 3-amino-2,3-dideoxy-scyllo-inosose + NADPH + H(+). The enzyme catalyses 2-deoxy-scyllo-inosamine + NAD(+) = 3-amino-2,3-dideoxy-scyllo-inosose + NADH + H(+). The protein operates within metabolic intermediate biosynthesis; 2-deoxystreptamine biosynthesis; 2-deoxystreptamine from D-glucose 6-phosphate: step 3/4. It participates in antibiotic biosynthesis; kanamycin biosynthesis. Its function is as follows. Catalyzes the oxidation of 2-deoxy-scyllo-inosamine (DOIA) with NAD(+) or NADP(+), forming 3-amino-2,3-dideoxy-scyllo-inosose (amino-DOI). The protein is 2-deoxy-scyllo-inosamine dehydrogenase (kanE) of Streptomyces kanamyceticus.